A 541-amino-acid polypeptide reads, in one-letter code: EH domain-containing protein 4 (541 aa).

N-acetylmethionine is present on Met1. Positions 58–289 constitute a Dynamin-type G domain; that stretch reads FENKPMILLV…DLFRDIQSLP (232 aa). The G1 motif stretch occupies residues 68-75; that stretch reads GQYSTGKT. 68-75 contacts ATP; the sequence is GQYSTGKT. A G2 motif region spans residues 94 to 95; the sequence is EP. Positions 156–159 are G3 motif; the sequence is DSPG. Residue Ser162 is modified to Phosphoserine. The G4 motif stretch occupies residues 222-225; the sequence is NKAD. Lys223 serves as a coordination point for ATP. Val246 is a region of interest (G5 motif). Trp261 is a binding site for ATP. The 89-residue stretch at 447 to 535 folds into the EH domain; sequence DKPVYDELFY…PHLVPPSHRK (89 aa). Tyr451 carries the post-translational modification Phosphotyrosine. Ser459 carries the phosphoserine modification. One can recognise an EF-hand domain in the interval 479–514; the sequence is LPNSVLGKIWKLADCDCDGMLDEEEFALAKHLIKIK. Residues Asp492, Asp494, Asp496, Met498, and Glu503 each coordinate Ca(2+).

Belongs to the TRAFAC class dynamin-like GTPase superfamily. Dynamin/Fzo/YdjA family. EHD subfamily. Homooligomer, and heterooligomer with EHD1, EHD2 and EHD3. Forms a complex with EHD4 and MICALL1; the complex controls CDH5 trafficking and coordinates angiogenesis. In terms of tissue distribution, highly expressed in pancreas and heart.

Its subcellular location is the early endosome membrane. The protein localises to the recycling endosome membrane. It is found in the cell membrane. It localises to the cell junction. The protein resides in the adherens junction. In terms of biological role, ATP- and membrane-binding protein that probably controls membrane reorganization/tubulation upon ATP hydrolysis. Plays a role in early endosomal transport. During sprouting angiogenesis, in complex with PACSIN2 and MICALL1, forms recycling endosome-like tubular structure at asymmetric adherens junctions to control CDH5 trafficking. The sequence is that of EH domain-containing protein 4 from Homo sapiens (Human).